The chain runs to 501 residues: 4,4'-diapophytoene desaturase (4,4'-diaponeurosporene-forming) (501 aa).

5 to 17 (VVGAGVTGLAAAA) contacts FAD.

Belongs to the carotenoid/retinoid oxidoreductase family. CrtN subfamily.

The catalysed reaction is 15-cis-4,4'-diapophytoene + 3 FAD + 3 H(+) = all-trans-4,4'-diaponeurosporene + 3 FADH2. It participates in carotenoid biosynthesis; staphyloxanthin biosynthesis; staphyloxanthin from farnesyl diphosphate: step 2/5. Functionally, involved in the biosynthesis of the yellow-orange carotenoid staphyloxanthin, which plays a role in the virulence via its protective function against oxidative stress. Catalyzes three successive dehydrogenation reactions that lead to the introduction of three double bonds into 4,4'-diapophytoene (dehydrosqualene), with 4,4'-diapophytofluene and 4,4'-diapo-zeta-carotene as intermediates, and 4,4'-diaponeurosporene (the major deep-yellow pigment in staphylococci strains) as the end product. This Staphylococcus haemolyticus (strain JCSC1435) protein is 4,4'-diapophytoene desaturase (4,4'-diaponeurosporene-forming).